Reading from the N-terminus, the 225-residue chain is 3-dehydroquinate dehydratase (225 aa).

3-dehydroquinate contacts are provided by residues 30 to 32 and arginine 62; that span reads EWR. Histidine 118 (proton donor/acceptor) is an active-site residue. Lysine 143 functions as the Schiff-base intermediate with substrate in the catalytic mechanism. Residues arginine 186, serine 205, and glutamine 209 each coordinate 3-dehydroquinate.

Belongs to the type-I 3-dehydroquinase family. In terms of assembly, homodimer.

The catalysed reaction is 3-dehydroquinate = 3-dehydroshikimate + H2O. The protein operates within metabolic intermediate biosynthesis; chorismate biosynthesis; chorismate from D-erythrose 4-phosphate and phosphoenolpyruvate: step 3/7. Its function is as follows. Involved in the third step of the chorismate pathway, which leads to the biosynthesis of aromatic amino acids. Catalyzes the cis-dehydration of 3-dehydroquinate (DHQ) and introduces the first double bond of the aromatic ring to yield 3-dehydroshikimate. This chain is 3-dehydroquinate dehydratase, found in Streptococcus thermophilus (strain ATCC BAA-250 / LMG 18311).